Here is a 340-residue protein sequence, read N- to C-terminus: GTP-binding protein REM 2 (340 aa).

Acidic residues predominate over residues 1–13; sequence MHTDLDTDMDMDT. The segment at 1 to 107 is disordered; the sequence is MHTDLDTDMD…SDSLGSGEAA (107 aa). The residue at position 27 (Ser-27) is a Phosphoserine. Basic and acidic residues predominate over residues 40 to 53; that stretch reads LLKKSEKLLAELDR. Residues 93–104 are compositionally biased toward low complexity; that stretch reads SSSGSSDSLGSG. GTP contacts are provided by residues 121–128, 229–232, and 260–261; these read GESGVGKS, NKSD, and AA. A disordered region spans residues 283–308; that stretch reads RNHAGGQRPDPGSPEGPAPPARRESL. The span at 293–302 shows a compositional bias: pro residues; sequence PGSPEGPAPP. Residue Ser-295 is modified to Phosphoserine.

It belongs to the small GTPase superfamily. RGK family.

It is found in the cell membrane. Its function is as follows. Binds GTP saturably and exhibits a low intrinsic rate of GTP hydrolysis. The protein is GTP-binding protein REM 2 (REM2) of Homo sapiens (Human).